Here is a 123-residue protein sequence, read N- to C-terminus: Small ribosomal subunit protein uS13 (123 aa).

Residues 95–123 (GLPVRGQKTKTNARTRKGPKRTVGRKKKK) are disordered. Basic residues predominate over residues 101–123 (QKTKTNARTRKGPKRTVGRKKKK).

The protein belongs to the universal ribosomal protein uS13 family. Part of the 30S ribosomal subunit. Forms a loose heterodimer with protein S19. Forms two bridges to the 50S subunit in the 70S ribosome.

In terms of biological role, located at the top of the head of the 30S subunit, it contacts several helices of the 16S rRNA. In the 70S ribosome it contacts the 23S rRNA (bridge B1a) and protein L5 of the 50S subunit (bridge B1b), connecting the 2 subunits; these bridges are implicated in subunit movement. Contacts the tRNAs in the A and P-sites. This Alkaliphilus metalliredigens (strain QYMF) protein is Small ribosomal subunit protein uS13.